A 492-amino-acid chain; its full sequence is Katanin p60 ATPase-containing subunit A1 (492 aa).

The tract at residues 80–186 (STPPKASQQE…ESEPKKFDST (107 aa)) is disordered. Residues 145-171 (PNDKGKAVRGREKKDQQNKGKEEKSKS) are compositionally biased toward basic and acidic residues. 250-257 (GPPGTGKT) contacts ATP.

It belongs to the AAA ATPase family. Katanin p60 subunit A1 subfamily. As to quaternary structure, can homooligomerize into hexameric rings, which may be promoted by interaction with microtubules. Interacts with KATNB1, which may serve as a targeting subunit.

It localises to the cytoplasm. It is found in the cytoskeleton. The protein resides in the microtubule organizing center. The protein localises to the centrosome. Its subcellular location is the spindle pole. It localises to the spindle. The enzyme catalyses n ATP + n H2O + a microtubule = n ADP + n phosphate + (n+1) alpha/beta tubulin heterodimers.. With respect to regulation, ATPase activity is stimulated by microtubules, which promote homooligomerization. ATP-dependent microtubule severing is stimulated by interaction with KATNB1. Functionally, catalytic subunit of a complex which severs microtubules in an ATP-dependent manner. Microtubule severing may promote rapid reorganization of cellular microtubule arrays and the release of microtubules from the centrosome following nucleation. The polypeptide is Katanin p60 ATPase-containing subunit A1 (Gallus gallus (Chicken)).